The sequence spans 86 residues: Photosystem I reaction center subunit PsaK 1 (86 aa).

Helical transmembrane passes span 14 to 34 (LSWS…AIAF) and 61 to 81 (AVLG…LGLA).

Belongs to the PsaG/PsaK family.

The protein localises to the cellular thylakoid membrane. In Synechocystis sp. (strain ATCC 27184 / PCC 6803 / Kazusa), this protein is Photosystem I reaction center subunit PsaK 1 (psaK1).